Reading from the N-terminus, the 325-residue chain is MSKTVTVTGAAGAIGYAILFRIASGQMLGPDQKLRLKLLEIEPALKAAEGTAMELYDCAFPLLEAVDITADPKEAFDGANVCLLIGARPRQRGMERADLLEANGQIFKPQGRAINDHAADDVRVLVVGNPANTNCLIAMNNAPDVPRERFSAMTRLDENRAVSMLAQKLGVGVEDVRDLVVWGNHSPTMFPDLFNARVKGQRAVDLVEMEWYENEYIPRVGKRGAEIIEARGASSAASAANAAIDHVRDWMLGADSLHSMAVASSGQYGVEEGLVSSFPVRLPGGGEYEIPEGLEVGDFARSKLEITIGELKEERDAVRKLGLIG.

9-15 (GAAGAIG) provides a ligand contact to NAD(+). 2 residues coordinate substrate: arginine 90 and arginine 96. Residues asparagine 103, glutamine 110, and 127–129 (VGN) contribute to the NAD(+) site. Substrate contacts are provided by asparagine 129 and arginine 160. Catalysis depends on histidine 185, which acts as the Proton acceptor.

The protein belongs to the LDH/MDH superfamily. MDH type 2 family.

It catalyses the reaction (S)-malate + NAD(+) = oxaloacetate + NADH + H(+). Functionally, catalyzes the reversible oxidation of malate to oxaloacetate. The chain is Malate dehydrogenase from Rubrobacter xylanophilus (strain DSM 9941 / JCM 11954 / NBRC 16129 / PRD-1).